A 284-amino-acid polypeptide reads, in one-letter code: 3-methyl-2-oxobutanoate hydroxymethyltransferase (284 aa).

Positions 44 and 83 each coordinate Mg(2+). 3-methyl-2-oxobutanoate contacts are provided by residues 44 to 45 (DS), Asp-83, and Lys-112. Glu-114 is a Mg(2+) binding site. The active-site Proton acceptor is the Glu-181.

This sequence belongs to the PanB family. In terms of assembly, homodecamer; pentamer of dimers. Mg(2+) is required as a cofactor.

Its subcellular location is the cytoplasm. The catalysed reaction is 3-methyl-2-oxobutanoate + (6R)-5,10-methylene-5,6,7,8-tetrahydrofolate + H2O = 2-dehydropantoate + (6S)-5,6,7,8-tetrahydrofolate. It participates in cofactor biosynthesis; coenzyme A biosynthesis. Its activity is regulated as follows. Neither activated nor inhibited by coenzyme A. Functionally, catalyzes the reversible reaction in which hydroxymethyl group from 5,10-methylenetetrahydrofolate is transferred onto alpha-ketoisovalerate to form ketopantoate. The protein is 3-methyl-2-oxobutanoate hydroxymethyltransferase of Thermococcus kodakarensis (strain ATCC BAA-918 / JCM 12380 / KOD1) (Pyrococcus kodakaraensis (strain KOD1)).